A 105-amino-acid chain; its full sequence is Insulin (105 aa).

The N-terminal stretch at 1-22 (MAFWLQAASLLVLLALSPGVDA) is a signal peptide. Intrachain disulfides connect Cys-29/Cys-91, Cys-41/Cys-104, and Cys-90/Cys-95. A propeptide spans 53-82 (DVDPLIGFLSPKSAKENEEYPFKDQTEMMV) (c peptide).

Belongs to the insulin family. As to quaternary structure, heterodimer of a B chain and an A chain linked by two disulfide bonds.

Its subcellular location is the secreted. Its function is as follows. Insulin decreases blood glucose concentration. It increases cell permeability to monosaccharides, amino acids and fatty acids. It accelerates glycolysis, the pentose phosphate cycle, and glycogen synthesis in liver. The chain is Insulin (ins) from Oncorhynchus keta (Chum salmon).